The sequence spans 471 residues: UDP-glycosyltransferase 1 (471 aa).

The active-site Proton acceptor is the H15. H15 lines the an anthocyanidin pocket. D124 (charge relay) is an active-site residue. UDP-alpha-D-glucose contacts are provided by T146, A348, Q350, H365, W368, N369, S370, and E373. Residue A388 participates in an anthocyanidin binding. Residues E389 and Q390 each coordinate UDP-alpha-D-glucose.

Belongs to the UDP-glycosyltransferase family. In terms of tissue distribution, expressed in roots. Detected in stems and leaves.

The enzyme catalyses a 7-hydroxyisoflavone + UDP-alpha-D-glucose = a 7-hydroxyisoflavone 7-O-beta-D-glucoside + UDP + H(+). Functionally, isoflavone 7-O-glucosyltransferase converting daidzein to daidzin, genistein to genistin and formononetin to ononin. Shows some activity toward the chalcone isoliquiritigenin, the flavanones liquiritigenin and naringenin, and the flavone apigenin, but not toward cyanidin, luteolin, kaempferol, quercetin, daidzin and puerarin. The protein is UDP-glycosyltransferase 1 of Pueraria montana var. lobata (Kudzu vine).